A 386-amino-acid polypeptide reads, in one-letter code: Peroxisomal membrane protein PEX13 (386 aa).

The interval 1-76 (MSSTAVPRPK…SSGTYGESNT (76 aa)) is disordered. Over 1-263 (MSSTAVPRPK…KATRRKISWK (263 aa)) the chain is Lumenal. A compositionally biased stretch (polar residues) spans 23-39 (RNAQSLSAMMTSNQQDS). Positions 44–55 (ESNNSNSASESA) are enriched in low complexity. The segment covering 65–76 (LNSSGTYGESNT) has biased composition (polar residues). Residues 264–280 (PLLFFLMAVFGFPYLLN) traverse the membrane as a helical segment. Topologically, residues 281-386 (KFITKLQTSG…EHVDDETRTH (106 aa)) are cytoplasmic. Residues 306–372 (SKLEFARALY…PYNYIEIIKR (67 aa)) enclose the SH3 domain.

The protein belongs to the peroxin-13 family. As to quaternary structure, interacts (via SH3 domain) with PEX14 (via SH3-binding motif); forming the PEX13-PEX14 docking complex.

Its subcellular location is the peroxisome membrane. Component of the PEX13-PEX14 docking complex, a translocon channel that specifically mediates the import of peroxisomal cargo proteins bound to PEX5 or PEX21 receptors. The PEX13-PEX14 docking complex forms a large import pore which can be opened to a diameter of about 9 nm. Mechanistically, PEX5 (or PEX21) receptor along with cargo proteins associates with the PEX14 subunit of the PEX13-PEX14 docking complex in the cytosol, leading to the insertion of the receptor into the organelle membrane with the concomitant translocation of the cargo into the peroxisome matrix. The chain is Peroxisomal membrane protein PEX13 from Saccharomyces cerevisiae (strain ATCC 204508 / S288c) (Baker's yeast).